We begin with the raw amino-acid sequence, 251 residues long: 2,3-bisphosphoglycerate-dependent phosphoglycerate mutase 2 (251 aa).

Substrate-binding positions include 8-15 (RHGESTWN), 21-22 (TG), Arg-60, 87-90 (ERHY), Lys-98, 114-115 (RR), and 183-184 (GN). Residue His-9 is the Tele-phosphohistidine intermediate of the active site. Glu-87 functions as the Proton donor/acceptor in the catalytic mechanism.

This sequence belongs to the phosphoglycerate mutase family. BPG-dependent PGAM subfamily. Homodimer.

The enzyme catalyses (2R)-2-phosphoglycerate = (2R)-3-phosphoglycerate. The protein operates within carbohydrate degradation; glycolysis; pyruvate from D-glyceraldehyde 3-phosphate: step 3/5. In terms of biological role, catalyzes the interconversion of 2-phosphoglycerate and 3-phosphoglycerate. In Nitrosospira multiformis (strain ATCC 25196 / NCIMB 11849 / C 71), this protein is 2,3-bisphosphoglycerate-dependent phosphoglycerate mutase 2.